We begin with the raw amino-acid sequence, 160 residues long: Cyclic pyranopterin monophosphate synthase (160 aa).

Substrate is bound by residues 75–77 (LCH) and 113–114 (ME). The active site involves Asp128.

Belongs to the MoaC family. Homohexamer; trimer of dimers.

The enzyme catalyses (8S)-3',8-cyclo-7,8-dihydroguanosine 5'-triphosphate = cyclic pyranopterin phosphate + diphosphate. Its pathway is cofactor biosynthesis; molybdopterin biosynthesis. Its function is as follows. Catalyzes the conversion of (8S)-3',8-cyclo-7,8-dihydroguanosine 5'-triphosphate to cyclic pyranopterin monophosphate (cPMP). The chain is Cyclic pyranopterin monophosphate synthase from Ruthia magnifica subsp. Calyptogena magnifica.